The primary structure comprises 130 residues: Ribosome-binding factor A (130 aa).

Belongs to the RbfA family. Monomer. Binds 30S ribosomal subunits, but not 50S ribosomal subunits or 70S ribosomes.

Its subcellular location is the cytoplasm. One of several proteins that assist in the late maturation steps of the functional core of the 30S ribosomal subunit. Associates with free 30S ribosomal subunits (but not with 30S subunits that are part of 70S ribosomes or polysomes). Required for efficient processing of 16S rRNA. May interact with the 5'-terminal helix region of 16S rRNA. The protein is Ribosome-binding factor A of Alkalilimnicola ehrlichii (strain ATCC BAA-1101 / DSM 17681 / MLHE-1).